The following is a 186-amino-acid chain: Tegument protein UL55 (186 aa).

This sequence belongs to the alphaherpesvirinae HHV-1 UL55 family.

The protein resides in the virion tegument. It is found in the host nucleus matrix. The protein is Tegument protein UL55 of Homo sapiens (Human).